The sequence spans 344 residues: Bifunctional trans-3-hydroxy-L-proline dehydratase/2-epimerase (344 aa).

The Proton acceptor role is filled by serine 90. Residues 91–92 (GS), aspartate 252, and 257–258 (GT) each bind substrate.

Belongs to the proline racemase family.

It carries out the reaction trans-3-hydroxy-L-proline = 1-pyrroline-2-carboxylate + H2O. The enzyme catalyses trans-3-hydroxy-L-proline = cis-3-hydroxy-D-proline. Bifunctional enzyme catalyzing both the dehydration of trans-3-hydroxy-L-proline (t3LHyp) to Delta(1)-pyrroline-2-carboxylate (Pyr2C) and 2-epimerization of t3LHyp to cis-3-hydroxy-D-proline (c3DHyp). No dehydratase activity with L-proline, trans-4-hydroxy-L-proline (t4LHyp), cis-4-hydroxy-L-proline (c4LHyp), D-proline, cis-4-hydroxy-D-proline (c4DHyp), trans-4-hydroxy-D-proline (t4DHyp) or L-serine as substrates. Displays neither t4LHyp epimerase nor proline racemase activity. Is likely involved in a degradation pathway that converts t3LHyp to L-proline, which would allow P.aeruginosa to grow on t3LHyp as a sole carbon source. The protein is Bifunctional trans-3-hydroxy-L-proline dehydratase/2-epimerase of Pseudomonas aeruginosa (strain ATCC 15692 / DSM 22644 / CIP 104116 / JCM 14847 / LMG 12228 / 1C / PRS 101 / PAO1).